Here is an 887-residue protein sequence, read N- to C-terminus: Alanine--tRNA ligase (887 aa).

Zn(2+) is bound by residues histidine 581, histidine 585, cysteine 683, and histidine 687.

This sequence belongs to the class-II aminoacyl-tRNA synthetase family. It depends on Zn(2+) as a cofactor.

It is found in the cytoplasm. It catalyses the reaction tRNA(Ala) + L-alanine + ATP = L-alanyl-tRNA(Ala) + AMP + diphosphate. In terms of biological role, catalyzes the attachment of alanine to tRNA(Ala) in a two-step reaction: alanine is first activated by ATP to form Ala-AMP and then transferred to the acceptor end of tRNA(Ala). Also edits incorrectly charged Ser-tRNA(Ala) and Gly-tRNA(Ala) via its editing domain. This chain is Alanine--tRNA ligase, found in Ehrlichia ruminantium (strain Gardel).